A 406-amino-acid polypeptide reads, in one-letter code: NAC transcription factor NAM-B1 (406 aa).

Residues 1–11 show a composition bias toward polar residues; that stretch reads MGSPDSSSGSA. Positions 1–40 are disordered; sequence MGSPDSSSGSAQKPPRHQHQHQPPPPRRQGSAPELPPGFR. One can recognise an NAC domain in the interval 35–204; sequence LPPGFRFHPT…DWVLCRIYKK (170 aa). A DNA-binding region spans residues 137 to 210; it reads VGVKKALVFY…IYKKTSKAAA (74 aa).

The protein resides in the nucleus. Transcription factor of the NAC family associated with the grain protein content (GPC). Sequences of the 11 European varieties of H.vulgare tested belongs to the same haplotype while the sequence found in H.spontaneum, an ancestor of the cultivated H.vulgare which has a higher GPC, belongs to an other haplotype. This Hordeum vulgare subsp. spontaneum (Wild barley) protein is NAC transcription factor NAM-B1 (NAM-B1).